Reading from the N-terminus, the 1983-residue chain is Nonribosomal peptide synthetase verP (1983 aa).

The interval 11-405 is adenylation 1; it reads FAQAASRCPD…FRGRKDRTVK (395 aa). The 77-residue stretch at 526–602 folds into the Carrier 1 domain; the sequence is DRHLDTLLTV…DVAPLITSRA (77 aa). Ser-563 carries the O-(pantetheine 4'-phosphoryl)serine modification. Residues 769-1047 are condensation 1; sequence ETDELTVVLT…GQHFKHALYS (279 aa). Positions 1089–1469 are adenylation 2; that stretch reads QVMGQFPSLI…GRIDRLVKLR (381 aa). The Carrier 2 domain occupies 1584 to 1662; sequence ITRPKIEDKL…DQINMVRALL (79 aa). Ser-1622 is modified (O-(pantetheine 4'-phosphoryl)serine). The tract at residues 1652-1976 is condensation 2; sequence KDQINMVRAL…GGLEHPLFEC (325 aa).

The protein belongs to the NRP synthetase family.

It participates in mycotoxin biosynthesis. In terms of biological role, nonribosomal peptide synthetase; part of the gene cluster that mediates the biosynthesis of 11'-deoxyverticillin A, one of the dimeric epipolythiodioxopiperazines (ETPs) from the verticillin family that act as mycotoxins. 11'-deoxyverticillin A is required for normal conidiation. The nonribosomal peptide synthetase verP is speculated to be responsible for condensation of amino acids to form the carbon skeleton of verticillin, whereas the cluster-specific tailoring enzymes are involved in further modifications leading to the production of 11'-deoxyverticillin A. The polypeptide is Nonribosomal peptide synthetase verP (Clonostachys rogersoniana).